Reading from the N-terminus, the 425-residue chain is Queuine tRNA-ribosyltransferase accessory subunit 2 (425 aa).

Residues 302-323 form a disordered region; that stretch reads QNGAQDLEKNSPEEDQEEEVVK. The Zn(2+) site is built by cysteine 351, cysteine 353, cysteine 356, and histidine 382.

This sequence belongs to the queuine tRNA-ribosyltransferase family. QTRT2 subfamily. In terms of assembly, heterodimer of a catalytic subunit QTRT1 and an accessory subunit QTRT2. Zn(2+) is required as a cofactor.

The protein localises to the cytoplasm. It is found in the mitochondrion outer membrane. Its function is as follows. Non-catalytic subunit of the queuine tRNA-ribosyltransferase (TGT) that catalyzes the base-exchange of a guanine (G) residue with queuine (Q) at position 34 (anticodon wobble position) in tRNAs with GU(N) anticodons (tRNA-Asp, -Asn, -His and -Tyr), resulting in the hypermodified nucleoside queuosine (7-(((4,5-cis-dihydroxy-2-cyclopenten-1-yl)amino)methyl)-7-deazaguanosine). The sequence is that of Queuine tRNA-ribosyltransferase accessory subunit 2 from Gallus gallus (Chicken).